The primary structure comprises 72 residues: Long neurotoxin OH-17 (72 aa).

5 disulfides stabilise this stretch: Cys3-Cys21, Cys14-Cys42, Cys27-Cys31, Cys46-Cys57, and Cys58-Cys63.

This sequence belongs to the three-finger toxin family. Long-chain subfamily. Type II alpha-neurotoxin sub-subfamily. Expressed by the venom gland.

Its subcellular location is the secreted. Binds with high affinity to muscular (alpha-1/CHRNA1) and neuronal (alpha-7/CHRNA7) nicotinic acetylcholine receptor (nAChR) and inhibits acetylcholine from binding to the receptor, thereby impairing neuromuscular and neuronal transmission. The polypeptide is Long neurotoxin OH-17 (Ophiophagus hannah (King cobra)).